The chain runs to 96 residues: Defensin-like protein 69 (96 aa).

Residues 1–19 (MGSSKLLVAFTLIVMMTIS) form the signal peptide. Disulfide bonds link C37-C86, C41-C64, C50-C84, and C54-C85.

Belongs to the DEFL family.

The protein resides in the secreted. The polypeptide is Defensin-like protein 69 (Arabidopsis thaliana (Mouse-ear cress)).